The following is a 60-amino-acid chain: MADKKIKIRQIGSPIRRPKDQRKILTGLGLGKMHREVELVDTPEVRGMIRKLPHMVEVID.

This sequence belongs to the universal ribosomal protein uL30 family. Part of the 50S ribosomal subunit.

The sequence is that of Large ribosomal subunit protein uL30 from Sphingopyxis alaskensis (strain DSM 13593 / LMG 18877 / RB2256) (Sphingomonas alaskensis).